Consider the following 484-residue polypeptide: tRNA sulfurtransferase (484 aa).

The THUMP domain occupies 63–167; sequence QAFGERLACI…GDKLYMVTKR (105 aa). ATP contacts are provided by residues 185-186, lysine 267, glycine 289, and glutamine 298; that span reads LI. Cysteine 346 and cysteine 458 are disulfide-bonded. Positions 406 to 484 constitute a Rhodanese domain; that stretch reads IDTNEVVIDI…GYHNVKVYRP (79 aa). The Cysteine persulfide intermediate role is filled by cysteine 458.

This sequence belongs to the ThiI family.

It localises to the cytoplasm. It carries out the reaction [ThiI sulfur-carrier protein]-S-sulfanyl-L-cysteine + a uridine in tRNA + 2 reduced [2Fe-2S]-[ferredoxin] + ATP + H(+) = [ThiI sulfur-carrier protein]-L-cysteine + a 4-thiouridine in tRNA + 2 oxidized [2Fe-2S]-[ferredoxin] + AMP + diphosphate. The enzyme catalyses [ThiS sulfur-carrier protein]-C-terminal Gly-Gly-AMP + S-sulfanyl-L-cysteinyl-[cysteine desulfurase] + AH2 = [ThiS sulfur-carrier protein]-C-terminal-Gly-aminoethanethioate + L-cysteinyl-[cysteine desulfurase] + A + AMP + 2 H(+). It participates in cofactor biosynthesis; thiamine diphosphate biosynthesis. In terms of biological role, catalyzes the ATP-dependent transfer of a sulfur to tRNA to produce 4-thiouridine in position 8 of tRNAs, which functions as a near-UV photosensor. Also catalyzes the transfer of sulfur to the sulfur carrier protein ThiS, forming ThiS-thiocarboxylate. This is a step in the synthesis of thiazole, in the thiamine biosynthesis pathway. The sulfur is donated as persulfide by IscS. In Shewanella sp. (strain MR-7), this protein is tRNA sulfurtransferase.